The sequence spans 101 residues: NADH-quinone oxidoreductase subunit K (101 aa).

3 helical membrane passes run 4 to 24, 30 to 50, and 65 to 85; these read LSHY…GIFI, IVIL…LVAF, and FVLT…VVFF.

The protein belongs to the complex I subunit 4L family. In terms of assembly, NDH-1 is composed of 14 different subunits. Subunits NuoA, H, J, K, L, M, N constitute the membrane sector of the complex.

It is found in the cell inner membrane. The enzyme catalyses a quinone + NADH + 5 H(+)(in) = a quinol + NAD(+) + 4 H(+)(out). In terms of biological role, NDH-1 shuttles electrons from NADH, via FMN and iron-sulfur (Fe-S) centers, to quinones in the respiratory chain. The immediate electron acceptor for the enzyme in this species is believed to be ubiquinone. Couples the redox reaction to proton translocation (for every two electrons transferred, four hydrogen ions are translocated across the cytoplasmic membrane), and thus conserves the redox energy in a proton gradient. The chain is NADH-quinone oxidoreductase subunit K from Methylobacterium sp. (strain 4-46).